Here is a 75-residue protein sequence, read N- to C-terminus: Large ribosomal subunit protein bL31 (75 aa).

The protein belongs to the bacterial ribosomal protein bL31 family. Type A subfamily. In terms of assembly, part of the 50S ribosomal subunit.

Binds the 23S rRNA. This Pelodictyon phaeoclathratiforme (strain DSM 5477 / BU-1) protein is Large ribosomal subunit protein bL31.